A 354-amino-acid polypeptide reads, in one-letter code: Bifunctional transcriptional activator/DNA repair enzyme Ada (354 aa).

The segment at 1 to 171 (MKKATCLTDD…SSSYYRKADE (171 aa)) is methylphosphotriester-DNA--protein-cysteine methyltransferase. Threonine 34 is a binding site for DNA. Cysteine 38 serves as the catalytic Nucleophile; methyl group acceptor from methylphosphotriester. Residues cysteine 38 and cysteine 42 each coordinate Zn(2+). Residues arginine 43, arginine 45, and arginine 67 each coordinate DNA. Residues cysteine 69 and cysteine 72 each coordinate Zn(2+). Residues 85–183 (DKITHACRLL…GMTAKQFRHG (99 aa)) enclose the HTH araC/xylS-type domain. A DNA-binding region (H-T-H motif) is located at residues 102 to 121 (LEALADQVAMSPFHLHRLFK). The segment at 181 to 354 (RHGGENLAVR…LRREAENEER (174 aa)) is methylated-DNA--protein-cysteine methyltransferase. The Nucleophile; methyl group acceptor from either O6-methylguanine or O4-methylthymine role is filled by cysteine 321.

This sequence in the C-terminal section; belongs to the MGMT family. Requires Zn(2+) as cofactor.

It catalyses the reaction (2'-deoxyribonucleoside 5'-methylphosphotriester)-DNA + L-cysteinyl-[protein] = 2'-deoxyribonucleotide-DNA + S-methyl-L-cysteinyl-[protein] + H(+). The catalysed reaction is a 6-O-methyl-2'-deoxyguanosine in DNA + L-cysteinyl-[protein] = S-methyl-L-cysteinyl-[protein] + a 2'-deoxyguanosine in DNA. The enzyme catalyses a 4-O-methyl-thymidine in DNA + L-cysteinyl-[protein] = a thymidine in DNA + S-methyl-L-cysteinyl-[protein]. Its function is as follows. Involved in the adaptive response to alkylation damage in DNA caused by alkylating agents. Repairs O6-methylguanine (O6-MeG) and O4-methylthymine (O4-MeT) in DNA. Repairs the methylated nucleobase in DNA by stoichiometrically transferring the methyl group to a cysteine residue in the enzyme (Cys-321). Also specifically repairs the Sp diastereomer of DNA methylphosphotriester lesions by the same mechanism, although the methyl transfer occurs onto a different cysteine residue (Cys-38). Cannot demethylate the other diastereomer, Rp-methylphosphotriester. This is a suicide reaction: the enzyme is irreversibly inactivated. In terms of biological role, the methylation of Ada by methylphosphotriesters in DNA leads to its activation as a transcriptional regulator that activates the transcription of its own gene, ada, and other alkylation resistance genes, alkA, alkB and aidB. This chain is Bifunctional transcriptional activator/DNA repair enzyme Ada (ada), found in Escherichia coli (strain K12).